Here is a 220-residue protein sequence, read N- to C-terminus: Fructose-6-phosphate aldolase (220 aa).

Lys-85 functions as the Schiff-base intermediate with substrate in the catalytic mechanism.

This sequence belongs to the transaldolase family. Type 3A subfamily. Homodecamer.

The protein resides in the cytoplasm. The enzyme catalyses beta-D-fructose 6-phosphate = dihydroxyacetone + D-glyceraldehyde 3-phosphate. Its function is as follows. Catalyzes the reversible formation of fructose 6-phosphate from dihydroxyacetone and D-glyceraldehyde 3-phosphate via an aldolization reaction. The polypeptide is Fructose-6-phosphate aldolase (Salmonella choleraesuis (strain SC-B67)).